Consider the following 839-residue polypeptide: Autophagy-related protein 9A (839 aa).

At Ala-2 the chain carries N-acetylalanine. At 2–61 (AQFDTEYQRLEASYSDSPPGEEDLLVHVAEGSKSPWHHIENLDLFFSRVYNLHQKNGFTC) the chain is on the cytoplasmic side. Positions 8–11 (YQRL) match the Tyrosine-based sorting signal motif. 3 positions are modified to phosphoserine: Ser-14, Ser-16, and Ser-18. The chain crosses the membrane as a helical span at residues 62–84 (MLIGEIFELMQFLFVVAFTTFLV). At 85–128 (SCVDYDILFANKMVNHSLHPTEPVKVTLPDAFLPAQVCSARIQE) the chain is on the lumenal side. The N-linked (GlcNAc...) asparagine glycan is linked to Asn-99. A helical transmembrane segment spans residues 129–154 (NGSLITILVIAGVFWIHRLIKFIYNI). The Cytoplasmic segment spans residues 155 to 290 (CCYWEIHSFY…ELAQRLSNRI (136 aa)). Residues 291–301 (LWIGIANFLLC) lie within the membrane without spanning it. The Cytoplasmic segment spans residues 302 to 319 (PLILIWQILYAFFSYAEV). An intramembrane segment occupies 320–328 (LKREPGALG). Residues 329–371 (ARCWSLYGRCYLRHFNELEHELQSRLNRGYKPASKYMNCFLSP) lie on the Cytoplasmic side of the membrane. A helical membrane pass occupies residues 372 to 397 (LLTLLAKNGAFFAGSILAVLIALTIY). At 398 to 406 (DEDVLAVEH) the chain is on the lumenal side. A helical membrane pass occupies residues 407–424 (VLTTVTLLGVTVTVCRSF). Over 425-470 (IPDQHMVFCPEQLLRVILAHIHYMPDHWQGNAHRSQTRDEFAQLFQ) the chain is Cytoplasmic. An intramembrane segment occupies 471–480 (YKAVFILEEL). Residues 481 to 483 (LSP) are Cytoplasmic-facing. Residues 484 to 492 (IVTPLILIF) lie within the membrane without spanning it. Residues 493-839 (CLRPRALEII…DELPPQVHKV (347 aa)) lie on the Cytoplasmic side of the membrane. Residues Ser-656, Ser-735, Ser-738, Ser-741, and Ser-828 each carry the phosphoserine modification. Disordered stretches follow at residues 656 to 689 (SPLQ…SSVW) and 717 to 839 (HKQQ…VHKV). Residues 724–736 (EPERHVWHRRESD) show a composition bias toward basic and acidic residues. 2 stretches are compositionally biased toward acidic residues: residues 737-747 (ESGESAPEEGG) and 823-832 (VPEEGSEDEL).

This sequence belongs to the ATG9 family. Homotrimer; forms a homotrimer with a central pore that forms a path between the two membrane leaflets. Interacts (via cytoplasmic its C-terminus) with ATG2A. Interacts with SUPT20H. Interacts (via the tyrosine-based sorting signal motif) with AP4M1; promoting association with the AP-4 complex. Interacts with ARFIP1 and ARFIP2. Interacts with PI4K2A and PI4KB. Interacts with ATG4A; the interaction is direct and promotes ATG9A trafficking. Ufmylated in a DDRGK1 dependent manner.

The protein localises to the preautophagosomal structure membrane. The protein resides in the cytoplasmic vesicle. It localises to the autophagosome membrane. It is found in the golgi apparatus. Its subcellular location is the trans-Golgi network membrane. The protein localises to the late endosome membrane. The protein resides in the recycling endosome membrane. It localises to the endoplasmic reticulum membrane. It is found in the mitochondrion membrane. It carries out the reaction a 1,2-diacyl-sn-glycero-3-phosphocholine(in) = a 1,2-diacyl-sn-glycero-3-phosphocholine(out). It catalyses the reaction a 1,2-diacyl-sn-glycero-3-phospho-L-serine(in) = a 1,2-diacyl-sn-glycero-3-phospho-L-serine(out). The enzyme catalyses a 1,2-diacyl-sn-glycero-3-phosphoethanolamine(in) = a 1,2-diacyl-sn-glycero-3-phosphoethanolamine(out). Phospholipid scramblase involved in autophagy by mediating autophagosomal membrane expansion. Cycles between the preautophagosomal structure/phagophore assembly site (PAS) and the cytoplasmic vesicle pool and supplies membrane for the growing autophagosome. Lipid scramblase activity plays a key role in preautophagosomal structure/phagophore assembly by distributing the phospholipids that arrive through ATG2 (ATG2A or ATG2B) from the cytoplasmic to the luminal leaflet of the bilayer, thereby driving autophagosomal membrane expansion. Also required to supply phosphatidylinositol 4-phosphate to the autophagosome initiation site by recruiting the phosphatidylinositol 4-kinase beta (PI4KB) in a process dependent on ARFIP2, but not ARFIP1. In addition to autophagy, also plays a role in necrotic cell death. The protein is Autophagy-related protein 9A of Rattus norvegicus (Rat).